A 670-amino-acid polypeptide reads, in one-letter code: NADH-ubiquinone oxidoreductase chain 5 (670 aa).

Transmembrane regions (helical) follow at residues 3–23, 36–56, 76–96, 113–133, 136–156, 178–198, 218–238, 250–270, 283–303, 319–339, 340–360, 375–395, 425–445, 461–481, and 618–638; these read LLIVFLPLLGSSVAGFFGRFL, VSFSSILSLIAFYEVALGASA, FLFDSLTVVMLIVVTFISSLV, FMCYLSIFTFFMLMLVTGDNF, LFLGWEGVGLASYLLIHFWFT, LALGIFGCFTLFQTVDFSTIF, ITLICILLFIGAVGKSAQIGL, TPVSALIHAATMVTAGVFMIA, LIVITFAGAMTSFLAATTGIL, LGYMIFACGISNYSVSVFHLM, NHAFFKALLFLSAGSVIHAMS, FPLTYAMMLMGSLSLIGFPFL, VSVLFTSYYSFRLLFLTFLVP, IPMAIPLILLALGSLFVGYLA, and SGSVYHYAFAMLLGSTPFVTF.

Belongs to the complex I subunit 5 family.

The protein localises to the mitochondrion inner membrane. It carries out the reaction a ubiquinone + NADH + 5 H(+)(in) = a ubiquinol + NAD(+) + 4 H(+)(out). Its function is as follows. Core subunit of the mitochondrial membrane respiratory chain NADH dehydrogenase (Complex I) that is believed to belong to the minimal assembly required for catalysis. Complex I functions in the transfer of electrons from NADH to the respiratory chain. The immediate electron acceptor for the enzyme is believed to be ubiquinone. The chain is NADH-ubiquinone oxidoreductase chain 5 (ND5) from Triticum aestivum (Wheat).